We begin with the raw amino-acid sequence, 124 residues long: UPF0102 protein Msil_0293 (124 aa).

The protein belongs to the UPF0102 family.

The polypeptide is UPF0102 protein Msil_0293 (Methylocella silvestris (strain DSM 15510 / CIP 108128 / LMG 27833 / NCIMB 13906 / BL2)).